The chain runs to 85 residues: Coiled-coil-helix-coiled-coil-helix domain-containing protein 7 (85 aa).

The CHCH domain occupies 13 to 55; that stretch reads INPCLSESDASTRCLDENNYDKERCSTYFLKYKNCRKFWHSIM. 2 short sequence motifs (cx9C motif) span residues 16–26 and 37–47; these read CLSESDASTRC and CSTYFLKYKNC. Cystine bridges form between Cys16–Cys47 and Cys26–Cys37.

This sequence belongs to the CHCHD7 family. Monomer.

Its subcellular location is the mitochondrion intermembrane space. The sequence is that of Coiled-coil-helix-coiled-coil-helix domain-containing protein 7 (CHCHD7) from Macaca fascicularis (Crab-eating macaque).